Reading from the N-terminus, the 350-residue chain is Twinfilin-1 (350 aa).

Serine 2 is subject to N-acetylserine. The region spanning 2-139 is the ADF-H 1 domain; it reads SHQTGIQASE…SLHGYKKYLL (138 aa). Phosphoserine occurs at positions 143 and 277. One can recognise an ADF-H 2 domain in the interval 175–313; sequence LQGVAFPISR…TADFLYDEVH (139 aa). Tyrosine 309 carries the post-translational modification Phosphotyrosine. Residues 317 to 350 are disordered; it reads HAHKQSFAKPKGPAGKRGIRRLIRGPAEAEATTD. Threonine 349 bears the Phosphothreonine mark.

This sequence belongs to the actin-binding proteins ADF family. Twinfilin subfamily. As to quaternary structure, interacts with G-actin; ADP-actin form and capping protein (CP). May also be able to interact with TWF2 and phosphoinositides, PI(4,5)P2. When bound to PI(4,5)P2, it is down-regulated. Interacts with ACTG1. Phosphorylated on serine and threonine residues. Widely expressed with highest levels in brain, liver and kidney. Also expressed in heart, lung and testis. Not detected in spleen or skeletal muscle.

It localises to the cytoplasm. The protein resides in the cytoskeleton. Its function is as follows. Actin-binding protein involved in motile and morphological processes. Inhibits actin polymerization, likely by sequestering G-actin. By capping the barbed ends of filaments, it also regulates motility. Seems to play an important role in clathrin-mediated endocytosis and distribution of endocytic organelles. This is Twinfilin-1 (Twf1) from Mus musculus (Mouse).